Reading from the N-terminus, the 255-residue chain is Small ribosomal subunit protein eS1 (255 aa).

Position 2 is an N-acetylalanine; partial (Ala2).

The protein belongs to the eukaryotic ribosomal protein eS1 family. In terms of assembly, component of the small ribosomal subunit. Mature ribosomes consist of a small (40S) and a large (60S) subunit. The 40S subunit contains about 33 different proteins and 1 molecule of RNA (18S). The 60S subunit contains about 49 different proteins and 3 molecules of RNA (25S, 5.8S and 5S).

Its subcellular location is the cytoplasm. In Yarrowia lipolytica (strain CLIB 122 / E 150) (Yeast), this protein is Small ribosomal subunit protein eS1.